Here is a 128-residue protein sequence, read N- to C-terminus: uncharacterized protein (128 aa).

Residues 95–123 adopt a coiled-coil conformation; sequence IIDFATAKRELDRLTEEIATLKGELAQDK.

It localises to the cellular thylakoid membrane. This is an uncharacterized protein from Synechocystis sp. (strain ATCC 27184 / PCC 6803 / Kazusa).